A 92-amino-acid chain; its full sequence is Cell division protein FtsB (92 aa).

At 1–3 (MRL) the chain is on the cytoplasmic side. A helical transmembrane segment spans residues 4–21 (FIFLLVAVLLLFQYDFWF). At 22-92 (GKNGYLDYKR…IFYHIVKEQK (71 aa)) the chain is on the periplasmic side. Residues 26-74 (YLDYKRTAQQIAQHKQENEKLSQRNQVVAAEIKDLKQGVEAIEERARFQ) adopt a coiled-coil conformation.

The protein belongs to the FtsB family. Part of a complex composed of FtsB, FtsL and FtsQ.

It is found in the cell inner membrane. In terms of biological role, essential cell division protein. May link together the upstream cell division proteins, which are predominantly cytoplasmic, with the downstream cell division proteins, which are predominantly periplasmic. The polypeptide is Cell division protein FtsB (Pasteurella multocida (strain Pm70)).